The following is a 299-amino-acid chain: Ribosomal protein L11 methyltransferase (299 aa).

S-adenosyl-L-methionine contacts are provided by threonine 149, glycine 170, aspartate 192, and asparagine 234.

This sequence belongs to the methyltransferase superfamily. PrmA family.

The protein resides in the cytoplasm. The enzyme catalyses L-lysyl-[protein] + 3 S-adenosyl-L-methionine = N(6),N(6),N(6)-trimethyl-L-lysyl-[protein] + 3 S-adenosyl-L-homocysteine + 3 H(+). Methylates ribosomal protein L11. The protein is Ribosomal protein L11 methyltransferase of Chromohalobacter salexigens (strain ATCC BAA-138 / DSM 3043 / CIP 106854 / NCIMB 13768 / 1H11).